Reading from the N-terminus, the 681-residue chain is T-box-containing protein 2 (681 aa).

The T-box DNA-binding region spans 149–323; the sequence is LWDQFSRAGT…NNPFAKGFRE (175 aa). Disordered regions lie at residues 316 to 351, 456 to 489, 521 to 558, and 589 to 611; these read PFAK…EQRR, GITS…NQSN, PNIN…LIPG, and ESGE…CQSG. Low complexity predominate over residues 470-489; that stretch reads NSFTYYNSSSPSSSDSNQSN. Residues 521–534 show a composition bias toward polar residues; it reads PNINIPNTVETNVH.

As to quaternary structure, monomer. In terms of tissue distribution, differentiating muscle and tailbud tip.

The protein resides in the nucleus. Involved in the transcriptional regulation of genes required for muscle differentiation. Binds to a palindromic site (called T site) and activates gene transcription when bound to such a site. The protein is T-box-containing protein 2 (T2) of Halocynthia roretzi (Sea squirt).